The primary structure comprises 817 residues: Protein-glutamine gamma-glutamyltransferase K (817 aa).

Disordered stretches follow at residues 1–38 (MMDG…SRRG) and 59–105 (DDWG…DGTI). A membrane anchorage region region spans residues 1–100 (MMDGPRSDVG…VSRGSGVNAA (100 aa)). The span at 17–26 (LQPPTTPSPE) shows a compositional bias: pro residues. Position 22 is a phosphothreonine (Thr-22). Phosphoserine occurs at positions 24, 68, 82, 85, 92, and 95. Low complexity predominate over residues 71–84 (RGSSSGTRRPGSRG). Residues Cys-377, His-436, and Asp-459 contribute to the active site. Ca(2+)-binding residues include Asn-499, Asp-501, Glu-548, and Glu-553. Residues 793-817 (GGFFSDAGGDSHLGETIPMASRGGA) form a disordered region.

It belongs to the transglutaminase superfamily. Transglutaminase family. In terms of assembly, interacts with PLAAT4. Requires Ca(2+) as cofactor. Palmitoylated. In terms of processing, the membrane anchorage region possesses a cluster of five cysteines within which fatty acid(s) may become thioester-linked. It is subject to phorbol ester-stimulated phosphorylation and is hypersensitive to proteolysis, which releases the enzyme in a soluble form. Post-translationally, tyrosine-phosphorylated.

It is found in the membrane. The catalysed reaction is L-glutaminyl-[protein] + L-lysyl-[protein] = [protein]-L-lysyl-N(6)-5-L-glutamyl-[protein] + NH4(+). Its function is as follows. Catalyzes the cross-linking of proteins and the conjugation of polyamines to proteins. Responsible for cross-linking epidermal proteins during formation of the stratum corneum. Involved in cell proliferation. The chain is Protein-glutamine gamma-glutamyltransferase K (TGM1) from Homo sapiens (Human).